The primary structure comprises 744 residues: Serine/threonine-protein kinase GM11705 (744 aa).

The segment covering 17 to 35 has biased composition (polar residues); sequence VLSSHQPSPSATHPQSVPS. Disordered regions lie at residues 17 to 38 and 54 to 78; these read VLSSHQPSPSATHPQSVPSKAN and NVQEDNSYNRDCDSPVSSSSEPEKE. Doublecortin domains follow at residues 154–240 and 309–392; these read LRIK…VEYN and RIVT…AEDF. The Protein kinase domain occupies 473-731; it reads YTLGRIIGDG…SEDILDHPWT (259 aa). ATP is bound by residues 479-487 and K502; that span reads IGDGNFAIV. The active-site Proton acceptor is the D594.

This sequence belongs to the protein kinase superfamily. CAMK Ser/Thr protein kinase family. CaMK subfamily.

The catalysed reaction is L-seryl-[protein] + ATP = O-phospho-L-seryl-[protein] + ADP + H(+). It carries out the reaction L-threonyl-[protein] + ATP = O-phospho-L-threonyl-[protein] + ADP + H(+). This Drosophila sechellia (Fruit fly) protein is Serine/threonine-protein kinase GM11705.